Reading from the N-terminus, the 202-residue chain is CASP-like protein 2U7 (202 aa).

Residues 1-10 (MLELYEKRRA) are Cytoplasmic-facing. The helical transmembrane segment at 11–31 (LLLLRLAAMFLSLAALLITVL) threads the bilayer. Over 32 to 64 (NREDGFFSINVFGSPQPILTKATADFTLVKGLK) the chain is Extracellular. Residues 65 to 85 (FFAGAMGIVAGYSFLQLAIAM) form a helical membrane-spanning segment. The Cytoplasmic portion of the chain corresponds to 86–101 (ASMFSGAPSILGGKRM). Residues 102-122 (AWLCFVGDMTASHLCAAAAAV) form a helical membrane-spanning segment. The Extracellular segment spans residues 123 to 148 (SAQLAYLGKRGAPMWSAVCTYFSHYC). The helical transmembrane segment at 149-169 (LVFGLAVIFAFLATLAALLVA) threads the bilayer. Residues 170-202 (SISSYHLFRLHGILQQQQQQRRQLQQEHVQDKP) are Cytoplasmic-facing.

This sequence belongs to the Casparian strip membrane proteins (CASP) family. Homodimer and heterodimers.

The protein resides in the cell membrane. The sequence is that of CASP-like protein 2U7 from Selaginella moellendorffii (Spikemoss).